Here is a 422-residue protein sequence, read N- to C-terminus: GTPase Obg (422 aa).

One can recognise an Obg domain in the interval 1–158; sequence MFYDRARIFV…RWLDLELKLL (158 aa). The 171-residue stretch at 159 to 329 folds into the OBG-type G domain; the sequence is ADVGLVGFPN…LVYRVSALLE (171 aa). Residues 165–172, 190–194, 212–215, 282–285, and 310–312 contribute to the GTP site; these read GFPNAGKS, FTTIT, DIPG, NKMD, and SAV. Mg(2+) is bound by residues serine 172 and threonine 192. In terms of domain architecture, OCT spans 337-422; the sequence is VPEALERPVI…IGDYEFEYVE (86 aa).

The protein belongs to the TRAFAC class OBG-HflX-like GTPase superfamily. OBG GTPase family. As to quaternary structure, monomer. Requires Mg(2+) as cofactor.

It localises to the cytoplasm. In terms of biological role, an essential GTPase which binds GTP, GDP and possibly (p)ppGpp with moderate affinity, with high nucleotide exchange rates and a fairly low GTP hydrolysis rate. Plays a role in control of the cell cycle, stress response, ribosome biogenesis and in those bacteria that undergo differentiation, in morphogenesis control. The polypeptide is GTPase Obg (Pelotomaculum thermopropionicum (strain DSM 13744 / JCM 10971 / SI)).